We begin with the raw amino-acid sequence, 502 residues long: ATP synthase subunit alpha (502 aa).

The segment at 114 to 139 is disordered; sequence PIDGRGPIETSKTRPIESPAPGVMDR. 169-176 is an ATP binding site; the sequence is GDRQTGKT.

It belongs to the ATPase alpha/beta chains family. In terms of assembly, F-type ATPases have 2 components, CF(1) - the catalytic core - and CF(0) - the membrane proton channel. CF(1) has five subunits: alpha(3), beta(3), gamma(1), delta(1), epsilon(1). CF(0) has three main subunits: a(1), b(2) and c(9-12). The alpha and beta chains form an alternating ring which encloses part of the gamma chain. CF(1) is attached to CF(0) by a central stalk formed by the gamma and epsilon chains, while a peripheral stalk is formed by the delta and b chains.

It localises to the cell membrane. The catalysed reaction is ATP + H2O + 4 H(+)(in) = ADP + phosphate + 5 H(+)(out). Functionally, produces ATP from ADP in the presence of a proton gradient across the membrane. The alpha chain is a regulatory subunit. The protein is ATP synthase subunit alpha of Halalkalibacterium halodurans (strain ATCC BAA-125 / DSM 18197 / FERM 7344 / JCM 9153 / C-125) (Bacillus halodurans).